The sequence spans 23 residues: Glutamine synthetase (23 aa).

This sequence belongs to the glutamine synthetase family. Oligomer of 12 subunits arranged in the form of two hexagons. Mg(2+) serves as cofactor.

It localises to the cytoplasm. The catalysed reaction is L-glutamate + NH4(+) + ATP = L-glutamine + ADP + phosphate + H(+). With respect to regulation, the activity of this enzyme could be controlled by adenylation under conditions of abundant glutamine. Functionally, involved in nitrogen metabolism via ammonium assimilation. Catalyzes the ATP-dependent biosynthesis of glutamine from glutamate and ammonia. This chain is Glutamine synthetase, found in Phormidium lapideum.